A 320-amino-acid chain; its full sequence is Formimidoylglutamase (320 aa).

Mn(2+) is bound by residues His-125, Asp-153, His-155, Asp-157, Asp-244, and Asp-246.

Belongs to the arginase family. The cofactor is Mn(2+).

The catalysed reaction is N-formimidoyl-L-glutamate + H2O = formamide + L-glutamate. The protein operates within amino-acid degradation; L-histidine degradation into L-glutamate; L-glutamate from N-formimidoyl-L-glutamate (hydrolase route): step 1/1. In terms of biological role, catalyzes the conversion of N-formimidoyl-L-glutamate to L-glutamate and formamide. The sequence is that of Formimidoylglutamase from Rhodococcus jostii (strain RHA1).